Here is a 258-residue protein sequence, read N- to C-terminus: Hemin import ATP-binding protein HmuV (258 aa).

Positions 1–238 (MLDIDVSNLS…DILERTYRTP (238 aa)) constitute an ABC transporter domain. Residue 34-41 (GENGAGKS) participates in ATP binding.

The protein belongs to the ABC transporter superfamily. Heme (hemin) importer (TC 3.A.1.14.5) family. As to quaternary structure, the complex is composed of two ATP-binding proteins (HmuV), two transmembrane proteins (HmuU) and a solute-binding protein (HmuT).

The protein localises to the cell inner membrane. In terms of biological role, part of the ABC transporter complex HmuTUV involved in hemin import. Responsible for energy coupling to the transport system. In Idiomarina loihiensis (strain ATCC BAA-735 / DSM 15497 / L2-TR), this protein is Hemin import ATP-binding protein HmuV.